Consider the following 910-residue polypeptide: Seizure 6-like protein 2 (910 aa).

The signal sequence occupies residues 1-27; it reads MGTPRAQHPPPPQLLFLILLSCPWIQG. The Extracellular portion of the chain corresponds to 28-844; that stretch reads LPLKEEEILP…DPSRQLEGGN (817 aa). The interval 41–48 is O-glycosylated at one site; it reads SETPTVAS. A disordered region spans residues 65-152; sequence EMGYLPGSDR…PLGPEGGEEE (88 aa). Residues 123 to 145 show a composition bias toward pro residues; it reads LTPPPGTTAPPPPSPASPGPPLG. A disulfide bridge connects residues Cys173 and Cys202. Residues 173–286 enclose the CUB 1 domain; the sequence is CNNNISEGEG…GGFRIHYQAY (114 aa). N-linked (GlcNAc...) asparagine glycans are attached at residues Asn176, Asn222, and Asn247. In terms of domain architecture, Sushi 1 spans 288–347; the sequence is LSCGFPPRPAHGDVSVTDLHPGGTATFHCDSGYQLQGEETLICLNGTRPSWNGETPSCMA. 6 disulfide bridges follow: Cys290–Cys330, Cys316–Cys345, Cys349–Cys376, Cys464–Cys508, Cys491–Cys523, and Cys527–Cys553. 5 N-linked (GlcNAc...) asparagine glycosylation sites follow: Asn332, Asn355, Asn373, Asn473, and Asn517. A CUB 2 domain is found at 349-459; sequence CGGTIHNATL…LLLSLRFEAF (111 aa). One can recognise a Sushi 2 domain in the interval 462–525; the sequence is DRCFAPFLAH…WNDTEPACKA (64 aa). In terms of domain architecture, CUB 3 spans 527–638; the sequence is CGGELSEPAG…QGFVLHFKEV (112 aa). The N-linked (GlcNAc...) asparagine glycan is linked to Asn641. Sushi domains are found at residues 642 to 701, 703 to 766, and 769 to 830; these read DTCP…ACQK, MTCA…KCAL, and EPCL…LCKV. 6 disulfides stabilise this stretch: Cys644–Cys686, Cys672–Cys699, Cys705–Cys747, Cys733–Cys764, Cys771–Cys813, and Cys799–Cys828. The chain crosses the membrane as a helical span at residues 845–865; the sequence is LALAILLPLGLVIVLGSGVYI. Over 866–910 the chain is Cytoplasmic; the sequence is YYTKLQGKSLFGFSGSHSYSPITVESDFSNPLYEAGDTREYEVSI.

It belongs to the SEZ6 family. In terms of processing, O-glycosylated with core 1 or possibly core 8 glycans.

It is found in the cell membrane. The protein localises to the endoplasmic reticulum membrane. Its function is as follows. May contribute to specialized endoplasmic reticulum functions in neurons. The sequence is that of Seizure 6-like protein 2 (SEZ6L2) from Homo sapiens (Human).